The primary structure comprises 305 residues: LysM and putative peptidoglycan-binding domain-containing protein 3 (305 aa).

The Extracellular segment spans residues 1–221 (MTGRNQHNGF…PYYGADWGMR (221 aa)). The N-linked (GlcNAc...) asparagine glycan is linked to asparagine 29. The segment at 31–60 (SETEYSEEDGEAFELRSRGRERHHRSTSRD) is disordered. The LysM domain occupies 68–112 (LIREIKEGDTLISISLQYFCTVADIKRANNLLTEQDFFALRSLRI). Positions 121–144 (TETHNTAPHKSSSPSGTCRITETP) are enriched in polar residues. The interval 121–156 (TETHNTAPHKSSSPSGTCRITETPVSGASLDSTSSS) is disordered. The segment covering 146 to 156 (SGASLDSTSSS) has biased composition (low complexity). The chain crosses the membrane as a helical span at residues 222–242 (WWTAVAIMLVVGIVTPVFYLL). Over 243–305 (YYEVLMKADV…QHHVKHQEET (63 aa)) the chain is Cytoplasmic.

It localises to the cell membrane. The protein localises to the golgi apparatus. Functionally, essential for Golgi structural integrity. The chain is LysM and putative peptidoglycan-binding domain-containing protein 3 (lysmd3) from Danio rerio (Zebrafish).